Reading from the N-terminus, the 241-residue chain is 7-cyano-7-deazaguanine synthase (241 aa).

An ATP-binding site is contributed by 9 to 19; the sequence is LSGGLDSSTVL. Residues cysteine 189, cysteine 197, cysteine 200, and cysteine 203 each coordinate Zn(2+).

It belongs to the QueC family. Requires Zn(2+) as cofactor.

It catalyses the reaction 7-carboxy-7-deazaguanine + NH4(+) + ATP = 7-cyano-7-deazaguanine + ADP + phosphate + H2O + H(+). Its pathway is purine metabolism; 7-cyano-7-deazaguanine biosynthesis. Its function is as follows. Catalyzes the ATP-dependent conversion of 7-carboxy-7-deazaguanine (CDG) to 7-cyano-7-deazaguanine (preQ(0)). This chain is 7-cyano-7-deazaguanine synthase, found in Thermoplasma volcanium (strain ATCC 51530 / DSM 4299 / JCM 9571 / NBRC 15438 / GSS1).